A 292-amino-acid polypeptide reads, in one-letter code: 3-methyl-2-oxobutanoate hydroxymethyltransferase 2 (292 aa).

Residues D52 and D91 each coordinate Mg(2+). 3-methyl-2-oxobutanoate contacts are provided by residues D52–S53, D91, and K120. E122 is a Mg(2+) binding site. The active-site Proton acceptor is the E189.

It belongs to the PanB family. In terms of assembly, homodecamer; pentamer of dimers. Mg(2+) serves as cofactor.

It is found in the cytoplasm. The catalysed reaction is 3-methyl-2-oxobutanoate + (6R)-5,10-methylene-5,6,7,8-tetrahydrofolate + H2O = 2-dehydropantoate + (6S)-5,6,7,8-tetrahydrofolate. It functions in the pathway cofactor biosynthesis; (R)-pantothenate biosynthesis; (R)-pantoate from 3-methyl-2-oxobutanoate: step 1/2. Its function is as follows. Catalyzes the reversible reaction in which hydroxymethyl group from 5,10-methylenetetrahydrofolate is transferred onto alpha-ketoisovalerate to form ketopantoate. In Bradyrhizobium diazoefficiens (strain JCM 10833 / BCRC 13528 / IAM 13628 / NBRC 14792 / USDA 110), this protein is 3-methyl-2-oxobutanoate hydroxymethyltransferase 2.